The sequence spans 365 residues: Spermidine-binding periplasmic protein SpuE (365 aa).

The signal sequence occupies residues 1–24 (MQHSIGKTLLVAALATAIAGPVQA). Residues T35, E181, D242, and N269 each contribute to the spermidine site.

This sequence belongs to the bacterial solute-binding protein PotD/PotF family.

The protein resides in the periplasm. Spermidine-binding protein probably required for its uptake into cells. Binds spermidine with high affinity (KD=14.3 nM). Does not bind putrescine, cadaverine or spermine. Spermidine binding induces large inter-domain conformational changes. Implicated in induction of type 3 secretion systems (T3SS), which play a role in virulence. This is Spermidine-binding periplasmic protein SpuE (spuE) from Pseudomonas aeruginosa (strain ATCC 15692 / DSM 22644 / CIP 104116 / JCM 14847 / LMG 12228 / 1C / PRS 101 / PAO1).